A 230-amino-acid polypeptide reads, in one-letter code: Cytidylate kinase (230 aa).

An ATP-binding site is contributed by 12–20; the sequence is GPSGAGKGT.

Belongs to the cytidylate kinase family. Type 1 subfamily.

Its subcellular location is the cytoplasm. It carries out the reaction CMP + ATP = CDP + ADP. The catalysed reaction is dCMP + ATP = dCDP + ADP. The chain is Cytidylate kinase from Shewanella sp. (strain W3-18-1).